Consider the following 363-residue polypeptide: 2,5-diketocamphane 1,2-monooxygenase 1 (363 aa).

FMN is bound by residues Met74 and 186–194 (TGLTKNSSS).

It belongs to the bacterial luciferase oxidoreductase family. Homodimer. Likely forms a loose transient complex with a P.putida flavin reductase that provides the required FMNH(2) to the enzyme.

It catalyses the reaction (1R,4R)-bornane-2,5-dione + FMNH2 + O2 = (1R,4R)-5-oxo-1,2-campholide + FMN + H2O + H(+). It functions in the pathway terpene metabolism; (R)-camphor degradation. Functionally, involved in the degradation and assimilation of (+)-camphor, which allows P.putida strain NCIMB 10007 to grow on this enantiomer of camphor as the sole carbon source. Catalyzes the FMNH(2)-dependent lactonization of 2,5-diketocamphane via a Baeyer-Villiger oxidation to produce the unstable lactone 5-oxo-1,2-campholide with (R,R) configuration, that presumably undergoes spontaneous hydrolysis to form 2-oxo-Delta(3)-4,5,5-trimethylcyclopentenylacetate. Is also able to convert (+)-camphor and norcamphor to the corresponding lactone in vitro. Shows no conversion of (-)-camphor, (+)-fenchone, (-)-fenchone, and (+)-nopinone. Acts only on bicyclic ketones; is not active towards monocyclic ketones, aromatic ketones, the aliphatic 2-decanone, 1-indanone and progesterone. The protein is 2,5-diketocamphane 1,2-monooxygenase 1 of Pseudomonas putida (Arthrobacter siderocapsulatus).